A 153-amino-acid chain; its full sequence is Holo-[acyl-carrier-protein] synthase (153 aa).

Positions 24 and 78 each coordinate Mg(2+).

Belongs to the P-Pant transferase superfamily. AcpS family. The cofactor is Mg(2+).

Its subcellular location is the cytoplasm. It catalyses the reaction apo-[ACP] + CoA = holo-[ACP] + adenosine 3',5'-bisphosphate + H(+). Transfers the 4'-phosphopantetheine moiety from coenzyme A to a Ser of acyl-carrier-protein. This Bordetella pertussis (strain Tohama I / ATCC BAA-589 / NCTC 13251) protein is Holo-[acyl-carrier-protein] synthase.